An 85-amino-acid polypeptide reads, in one-letter code: Cytochrome c oxidase assembly factor 3, mitochondrial (85 aa).

The Mitochondrial matrix portion of the chain corresponds to 1–26; the sequence is MVLNPSKYQDTRTWKMTPAMIRARKP. A helical membrane pass occupies residues 27 to 49; the sequence is FFKGNMLGLTLLLGVTGSVYYYT. Residues 50-85 lie on the Mitochondrial intermembrane side of the membrane; it reads YHFLHKDNDFADVPIPPIDPQELEALKKEYEAKKKA.

This sequence belongs to the COA3 family. Component of 250-400 kDa complexes called cytochrome oxidase assembly intermediates or COA complexes composed at least COA3, COX14, COX5A, SHY1 and SSC1. Interacts with COX1 and MSS51.

The protein localises to the mitochondrion inner membrane. Its function is as follows. Required for assembly of cytochrome c oxidase (complex IV). With COX14, negatively regulates COX1 translation and is involved in MSS51 association with newly synthesized COX1. The chain is Cytochrome c oxidase assembly factor 3, mitochondrial (COA3) from Saccharomyces cerevisiae (strain RM11-1a) (Baker's yeast).